The sequence spans 536 residues: Formate--tetrahydrofolate ligase (536 aa).

Residue 51 to 58 (TPAGEGKT) participates in ATP binding.

This sequence belongs to the formate--tetrahydrofolate ligase family.

It carries out the reaction (6S)-5,6,7,8-tetrahydrofolate + formate + ATP = (6R)-10-formyltetrahydrofolate + ADP + phosphate. It functions in the pathway one-carbon metabolism; tetrahydrofolate interconversion. The protein is Formate--tetrahydrofolate ligase of Thermoplasma acidophilum (strain ATCC 25905 / DSM 1728 / JCM 9062 / NBRC 15155 / AMRC-C165).